Reading from the N-terminus, the 104-residue chain is Large ribosomal subunit protein bL21 (104 aa).

The protein belongs to the bacterial ribosomal protein bL21 family. As to quaternary structure, part of the 50S ribosomal subunit. Contacts protein L20.

Its function is as follows. This protein binds to 23S rRNA in the presence of protein L20. This is Large ribosomal subunit protein bL21 from Pseudomonas putida (strain W619).